Consider the following 361-residue polypeptide: Hydroxycarboxylate dehydrogenase B (361 aa).

Residues histidine 48, 122–124 (GRI), 178–182 (LLDYA), histidine 234, asparagine 270, and 313–316 (GEWE) contribute to the NAD(+) site.

The protein belongs to the LDH2/MDH2 oxidoreductase family.

The enzyme catalyses 2-hydroxyglutarate + NADP(+) = 2-oxoglutarate + NADPH + H(+). It carries out the reaction 2-hydroxyglutarate + NAD(+) = 2-oxoglutarate + NADH + H(+). The catalysed reaction is 3-phenyllactate + NADP(+) = 3-phenylpyruvate + NADPH + H(+). It catalyses the reaction 3-phenyllactate + NAD(+) = 3-phenylpyruvate + NADH + H(+). The enzyme catalyses (2R)-2-hydroxy-3-(4-hydroxyphenyl)propanoate + NAD(+) = 3-(4-hydroxyphenyl)pyruvate + NADH + H(+). It carries out the reaction (2R)-2-hydroxy-3-(4-hydroxyphenyl)propanoate + NADP(+) = 3-(4-hydroxyphenyl)pyruvate + NADPH + H(+). The catalysed reaction is (2R)-3-(3,4-dihydroxyphenyl)lactate + NADP(+) = 3-(3,4-dihydroxyphenyl)pyruvate + NADPH + H(+). It catalyses the reaction (2R)-3-(3,4-dihydroxyphenyl)lactate + NAD(+) = 3-(3,4-dihydroxyphenyl)pyruvate + NADH + H(+). Catalyzes the NAD(P)H-dependent reduction of 2-oxoglutarate, phenylpyruvate and (4-hydroxyphenyl)pyruvate, leading to the respective 2-hydroxycarboxylate in vitro. Shows a preference for NADPH over NADH as a redox partner. Do not catalyze the reverse reactions. This Escherichia coli (strain K12) protein is Hydroxycarboxylate dehydrogenase B.